The primary structure comprises 350 residues: tRNA U34 carboxymethyltransferase (350 aa).

Residues lysine 101, tryptophan 125, lysine 130, glycine 150, aspartate 172–serine 174, leucine 208–glutamate 209, methionine 224, tyrosine 228, and arginine 343 contribute to the carboxy-S-adenosyl-L-methionine site.

Belongs to the class I-like SAM-binding methyltransferase superfamily. CmoB family. Homotetramer.

It carries out the reaction carboxy-S-adenosyl-L-methionine + 5-hydroxyuridine(34) in tRNA = 5-carboxymethoxyuridine(34) in tRNA + S-adenosyl-L-homocysteine + H(+). Functionally, catalyzes carboxymethyl transfer from carboxy-S-adenosyl-L-methionine (Cx-SAM) to 5-hydroxyuridine (ho5U) to form 5-carboxymethoxyuridine (cmo5U) at position 34 in tRNAs. The protein is tRNA U34 carboxymethyltransferase of Psychrobacter arcticus (strain DSM 17307 / VKM B-2377 / 273-4).